A 202-amino-acid chain; its full sequence is Transmembrane protein 223 (202 aa).

Residues 1–43 are Mitochondrial matrix-facing; sequence MAAPWRRWPTGLLAVLRPLLTCRPLQGTTLQRDVLLFEHDRGR. Residues 44-64 traverse the membrane as a helical segment; it reads FFTILGLFCAGQGVFWASMAV. At 65 to 97 the chain is on the mitochondrial intermembrane side; it reads AAVSRPPVPVQPLDAEVPNRGPFDLRSALWRYG. The chain crosses the membrane as a helical span at residues 98–118; sequence LAVGCGAIGALVLGAGLLFSL. The Mitochondrial matrix portion of the chain corresponds to 119–202; it reads RSVRSVVLRA…DNTVGAYRSL (84 aa).

The protein belongs to the TMEM223 family. Associates with the mitochondrial ribosome.

Its subcellular location is the mitochondrion inner membrane. In terms of biological role, mitochondrial ribosome-associated protein involved in the first steps of cytochrome c oxidase complex (complex IV) biogenesis. Stimulates the translation of MT-CO1 mRNA and is a constituent of early MT-CO1 assembly intermediates. This Homo sapiens (Human) protein is Transmembrane protein 223.